Consider the following 607-residue polypeptide: Elongation factor 4 (607 aa).

In terms of domain architecture, tr-type G spans 11 to 193 (SKIRNFSIIA…QIVEKVPAPT (183 aa)). GTP-binding positions include 23 to 28 (DHGKST) and 140 to 143 (NKID).

Belongs to the TRAFAC class translation factor GTPase superfamily. Classic translation factor GTPase family. LepA subfamily.

Its subcellular location is the cell membrane. It catalyses the reaction GTP + H2O = GDP + phosphate + H(+). In terms of biological role, required for accurate and efficient protein synthesis under certain stress conditions. May act as a fidelity factor of the translation reaction, by catalyzing a one-codon backward translocation of tRNAs on improperly translocated ribosomes. Back-translocation proceeds from a post-translocation (POST) complex to a pre-translocation (PRE) complex, thus giving elongation factor G a second chance to translocate the tRNAs correctly. Binds to ribosomes in a GTP-dependent manner. This chain is Elongation factor 4, found in Bacillus cereus (strain AH820).